Reading from the N-terminus, the 138-residue chain is Ribonuclease VapC21 (138 aa).

A PINc domain is found at 6–128 (LLDKSAAYRA…ERIAAITRQP (123 aa)). 2 residues coordinate Mg(2+): D8 and D97.

This sequence belongs to the PINc/VapC protein family. Requires Mg(2+) as cofactor.

Its function is as follows. Toxic component of a type II toxin-antitoxin (TA) system. An RNase. Its toxic effect is neutralized by coexpression with cognate antitoxin VapB21. The polypeptide is Ribonuclease VapC21 (Mycobacterium tuberculosis (strain CDC 1551 / Oshkosh)).